The sequence spans 328 residues: WUSCHEL-related homeobox 6 (328 aa).

Residues 1-11 (MEGSSNSPDRQ) are compositionally biased toward polar residues. Residues 1–45 (MEGSSNSPDRQSSGGSPPEERGGGGSGGGGGRSAAGEPVRSRWTP) form a disordered region. Over residues 23–33 (GGGSGGGGGRS) the composition is skewed to gly residues. A DNA-binding region (homeobox; WUS-type) is located at residues 38-102 (PVRSRWTPKP…NRRSRSRRRQ (65 aa)).

It belongs to the WUS homeobox family.

Its subcellular location is the nucleus. Functionally, transcription factor which may be involved in developmental processes. In Oryza sativa subsp. indica (Rice), this protein is WUSCHEL-related homeobox 6 (WOX6).